Reading from the N-terminus, the 368-residue chain is 3-dehydroquinate synthase (368 aa).

NAD(+) contacts are provided by residues 69 to 74 (DGEAYK), 103 to 107 (GVIGD), 127 to 128 (TT), Lys-140, and Lys-149. 3 residues coordinate Zn(2+): Glu-182, His-245, and His-262.

Belongs to the sugar phosphate cyclases superfamily. Dehydroquinate synthase family. NAD(+) serves as cofactor. Co(2+) is required as a cofactor. The cofactor is Zn(2+).

It localises to the cytoplasm. It catalyses the reaction 7-phospho-2-dehydro-3-deoxy-D-arabino-heptonate = 3-dehydroquinate + phosphate. The protein operates within metabolic intermediate biosynthesis; chorismate biosynthesis; chorismate from D-erythrose 4-phosphate and phosphoenolpyruvate: step 2/7. In terms of biological role, catalyzes the conversion of 3-deoxy-D-arabino-heptulosonate 7-phosphate (DAHP) to dehydroquinate (DHQ). The chain is 3-dehydroquinate synthase from Pseudomonas aeruginosa (strain ATCC 15692 / DSM 22644 / CIP 104116 / JCM 14847 / LMG 12228 / 1C / PRS 101 / PAO1).